The following is a 178-amino-acid chain: Large ribosomal subunit protein bL25 (178 aa).

This sequence belongs to the bacterial ribosomal protein bL25 family. CTC subfamily. Part of the 50S ribosomal subunit; part of the 5S rRNA/L5/L18/L25 subcomplex. Contacts the 5S rRNA. Binds to the 5S rRNA independently of L5 and L18.

Its function is as follows. This is one of the proteins that binds to the 5S RNA in the ribosome where it forms part of the central protuberance. The polypeptide is Large ribosomal subunit protein bL25 (Campylobacter jejuni subsp. jejuni serotype O:6 (strain 81116 / NCTC 11828)).